Reading from the N-terminus, the 218-residue chain is External core antigen (218 aa).

A signal peptide spans 1-20; it reads MYLFHLCLVFACVPCPTVQA. Positions 26-28 are HBEAG; sequence GWL. Residues 180–211 are compositionally biased toward basic residues; it reads RRRGGARASRSPRRRTPSPRRRRSQSPRRRRS. A disordered region spans residues 180 to 218; the sequence is RRRGGARASRSPRRRTPSPRRRRSQSPRRRRSQSPSANC. The 1; half-length repeat unit spans residues 190 to 196; it reads SPRRRTP. Positions 190–212 are 3 X 8 AA repeats of S-P-R-R-R-R-S-Q; that stretch reads SPRRRTPSPRRRRSQSPRRRRSQ. Positions 190-218 are excised as a propeptide; it reads SPRRRTPSPRRRRSQSPRRRRSQSPSANC. Tandem repeats lie at residues 197 to 204 and 205 to 212.

It belongs to the orthohepadnavirus precore antigen family. Homodimerizes. In terms of processing, phosphorylated. Post-translationally, cleaved by host furin.

Its subcellular location is the secreted. The protein resides in the host nucleus. Its function is as follows. May regulate immune response to the intracellular capsid in acting as a T-cell tolerogen, by having an immunoregulatory effect which prevents destruction of infected cells by cytotoxic T-cells. This immune regulation may predispose to chronicity during perinatal infections and prevent severe liver injury during adult infections. The protein is External core antigen of Woodchuck hepatitis B virus (isolate 1) (WHV).